A 96-amino-acid polypeptide reads, in one-letter code: Citrate lyase acyl carrier protein (96 aa).

Ser-14 carries the post-translational modification O-(phosphoribosyl dephospho-coenzyme A)serine.

This sequence belongs to the CitD family. In terms of assembly, oligomer with a subunit composition of (alpha,beta,gamma)6.

The protein resides in the cytoplasm. Its function is as follows. Covalent carrier of the coenzyme of citrate lyase. This is Citrate lyase acyl carrier protein from Lactococcus lactis subsp. lactis (strain IL1403) (Streptococcus lactis).